Reading from the N-terminus, the 1003-residue chain is SWI/SNF-related matrix-associated actin-dependent regulator of chromatin subfamily A containing DEAD/H box 1 (1003 aa).

Disordered regions lie at residues 15–130, 172–235, and 274–351; these read KKID…SKYK, GSSR…HFPD, and AKKE…EDYS. Basic and acidic residues-rich tracts occupy residues 172–188, 221–235, and 274–294; these read GSSR…DSSP, KQEA…HFPD, and AKKE…DNKS. The 44-residue stretch at 221–264 folds into the CUE domain; sequence KQEASVKKLQRHFPDLDKEELREVLQEHDWSFHEALEALKLFAE. Over residues 295 to 311 the composition is skewed to low complexity; sequence SAKAKANQNSNKAMAQN. Residues 321–333 are compositionally biased toward basic and acidic residues; that stretch reads KYSENAKRDTRDL. Positions 486–654 constitute a Helicase ATP-binding domain; that stretch reads ALLHKHKVNM…MSLLNFVMPH (169 aa). 499 to 506 is a binding site for ATP; sequence DEMGLGKT. The short motif at 605 to 608 is the DEGH box element; that stretch reads DEGH. Residues 835–997 enclose the Helicase C-terminal domain; sequence ILEKLLSDIK…TIPLDMATLL (163 aa).

Belongs to the SNF2/RAD54 helicase family.

The protein resides in the nucleus. The protein localises to the chromosome. The catalysed reaction is ATP + H2O = ADP + phosphate + H(+). In terms of biological role, DNA helicase that possesses intrinsic ATP-dependent nucleosome-remodeling activity and is both required for DNA repair and heterochromatin organization. Promotes DNA end resection of double-strand breaks (DSBs) following DNA damage: probably acts by weakening histone DNA interactions in nucleosomes flanking DSBs. Required for the restoration of heterochromatin organization after replication. The polypeptide is SWI/SNF-related matrix-associated actin-dependent regulator of chromatin subfamily A containing DEAD/H box 1 (smarcad1) (Xenopus tropicalis (Western clawed frog)).